The primary structure comprises 446 residues: Scytalone dehydratase-like protein Arp1 (446 aa).

Residue tyrosine 323 participates in substrate binding. Active-site residues include histidine 358 and histidine 383. Asparagine 404 contributes to the substrate binding site.

It belongs to the scytalone dehydratase family. As to quaternary structure, homotrimer. Each subunit contains an active site, located in the central part of the hydrophobic core of the monomer, which functions independently.

In terms of biological role, scytalone dehydratase-like protein; part of the Pks2 gene cluster that mediates the formation of infectious structures (appressoria), enabling these fungi to kill insects faster. The product of the Pks2 gene cluster is different from the one of Pks1 and has still not been identified. In Metarhizium acridum (strain CQMa 102), this protein is Scytalone dehydratase-like protein Arp1.